The primary structure comprises 440 residues: T-box transcription factor TBX20 (440 aa).

The T-box DNA-binding region spans 103 to 282; the sequence is LWDKFHDLGT…SNPFAKGFRD (180 aa).

Its subcellular location is the nucleus. In terms of biological role, transcriptional regulator that may be involved in heart developmental processes. This is T-box transcription factor TBX20 (tbx20) from Xenopus tropicalis (Western clawed frog).